The primary structure comprises 243 residues: Type III pantothenate kinase (243 aa).

ATP is bound at residue 6–13 (DIGNTNLK). 101-104 (GSDI) is a substrate binding site. The Proton acceptor role is filled by Asp-103. Residue Thr-125 coordinates ATP. Thr-176 serves as a coordination point for substrate.

The protein belongs to the type III pantothenate kinase family. Homodimer. NH4(+) serves as cofactor. The cofactor is K(+).

The protein localises to the cytoplasm. The catalysed reaction is (R)-pantothenate + ATP = (R)-4'-phosphopantothenate + ADP + H(+). Its pathway is cofactor biosynthesis; coenzyme A biosynthesis; CoA from (R)-pantothenate: step 1/5. Functionally, catalyzes the phosphorylation of pantothenate (Pan), the first step in CoA biosynthesis. The sequence is that of Type III pantothenate kinase from Mycoplasma mobile (strain ATCC 43663 / 163K / NCTC 11711) (Mesomycoplasma mobile).